Here is a 65-residue protein sequence, read N- to C-terminus: Small, acid-soluble spore protein 2 (65 aa).

Belongs to the alpha/beta-type SASP family.

Functionally, SASP are bound to spore DNA. They are double-stranded DNA-binding proteins that cause DNA to change to an a-like conformation. They protect the DNA backbone from chemical and enzymatic cleavage and are thus involved in dormant spore's high resistance to UV light. This Bacillus cereus protein is Small, acid-soluble spore protein 2 (sasP-2).